The chain runs to 487 residues: MTELFIDGAWVAGSGPVFASRNPGTDAIAWQGASASAADVERAVASARRAFAGWSALDFDARCEIVKRFAALLTERKEALAAAIGRETGKPLWEARTEVAAMAAKVAISIQAYHERTGEKRQDMADGVAVLRHRPHGVVAVFGPYNFPGHLPNGHIVPALIAGNTVVFKPSELAPGVARATVEVWHEAGLPAGVLNLVQGEKDTGIALANHRQIDGLFFTGSSDTGTLLHKQFGGRPEIVLALEMGGNNPLVIGAVEDIDAAVHHTIQSAFLSAGQRCTCARRIFVPQGAHGERFLARLVDVTSKITADVFDADPQPFMGAVISARAAAKLVDAQARLIEQGARPIIEMTQRDARLGFVNASIIDVTDVARLPDEEHFGPLAQIVRYARFDEAIERANDTAFGLSAGLLSDDAHAWEQFRRTIRAGIVNWNRPTNGASSAAPFGGTGRSGNHRPSAYYAADYCAYPMASVESTQLSLPASLSPGLHF.

Position 221-226 (221-226) interacts with NAD(+); that stretch reads GSSDTG. Active-site residues include Glu244 and Cys278.

Belongs to the aldehyde dehydrogenase family. AstD subfamily.

The enzyme catalyses N-succinyl-L-glutamate 5-semialdehyde + NAD(+) + H2O = N-succinyl-L-glutamate + NADH + 2 H(+). The protein operates within amino-acid degradation; L-arginine degradation via AST pathway; L-glutamate and succinate from L-arginine: step 4/5. In terms of biological role, catalyzes the NAD-dependent reduction of succinylglutamate semialdehyde into succinylglutamate. The protein is N-succinylglutamate 5-semialdehyde dehydrogenase of Burkholderia vietnamiensis (strain G4 / LMG 22486) (Burkholderia cepacia (strain R1808)).